The chain runs to 446 residues: ATP-dependent protease ATPase subunit HslU (446 aa).

Residues Val-18, 60-65, Asp-259, Glu-324, and Arg-396 each bind ATP; that span reads GVGKTE.

It belongs to the ClpX chaperone family. HslU subfamily. As to quaternary structure, a double ring-shaped homohexamer of HslV is capped on each side by a ring-shaped HslU homohexamer. The assembly of the HslU/HslV complex is dependent on binding of ATP.

It localises to the cytoplasm. Its function is as follows. ATPase subunit of a proteasome-like degradation complex; this subunit has chaperone activity. The binding of ATP and its subsequent hydrolysis by HslU are essential for unfolding of protein substrates subsequently hydrolyzed by HslV. HslU recognizes the N-terminal part of its protein substrates and unfolds these before they are guided to HslV for hydrolysis. This Acidovorax sp. (strain JS42) protein is ATP-dependent protease ATPase subunit HslU.